Here is a 63-residue protein sequence, read N- to C-terminus: Beta-insect depressant toxin Im-3 (63 aa).

Residues 1–63 enclose the LCN-type CS-alpha/beta domain; sequence KEGYGVGKDG…KVWESSTNTC (63 aa). Cystine bridges form between Cys-11/Cys-63, Cys-15/Cys-37, Cys-22/Cys-44, and Cys-26/Cys-46.

This sequence belongs to the long (4 C-C) scorpion toxin superfamily. Sodium channel inhibitor family. Beta subfamily. In terms of tissue distribution, expressed by the venom gland.

The protein localises to the secreted. Its function is as follows. Beta toxins bind voltage-independently at site-4 of sodium channels (Nav) and shift the voltage of activation toward more negative potentials thereby affecting sodium channel activation and promoting spontaneous and repetitive firing. Induces paralysis in cricket A.domestica but does not induce death. The polypeptide is Beta-insect depressant toxin Im-3 (Isometrus maculatus (Lesser brown scorpion)).